A 507-amino-acid chain; its full sequence is Phosphoprotein (507 aa).

Phosphoserine occurs at positions 86 and 151. The span at 137 to 160 (DGVEVWGGDEESENSDVDSGEPDP) shows a compositional bias: acidic residues. The segment at 137 to 307 (DGVEVWGGDE…QSNIEPEDDY (171 aa)) is disordered. Basic and acidic residues-rich tracts occupy residues 189–199 (EIQKLLEDQSR) and 222–233 (TASEKPIKKGTD). Low complexity-rich tracts occupy residues 236–252 (STSSGTMAESSSTGGAT) and 266–278 (NASAENALASASN). Residues 279 to 301 (VSPTQGSKTESGTTTSRISQSNI) are compositionally biased toward polar residues. The interval 304–376 (EDDYDDELFS…LSSVMIAIPG (73 aa)) is multimerization. An interaction with the nucleocapsid (N-RNA) region spans residues 459–507 (ASRSVIRSIIKSSHLGEDRKDYLMSLLNDIQGSKDLAQFHQMLVKILKN).

The protein belongs to the morbillivirus P protein family. In terms of assembly, homotetramer. Interacts (via multimerization domain) with polymerase L; this interaction forms the polymerase L-P complex. Interacts (via N-terminus) with N0 (via Ncore); this interaction allows P to chaperon N0 to avoid N polymerization before encapsidation. Interacts (via C-terminus) with N-RNA template; this interaction positions the polymerase on the template for both transcription and replication. Post-translationally, phosphorylation on serines by host CK2 is necessary for the formation of viral factories.

In terms of biological role, essential cofactor of the RNA polymerase L that plays a central role in the transcription and replication by forming the polymerase complex with RNA polymerase L and recruiting L to the genomic N-RNA template for RNA synthesis. Also plays a central role in the encapsidation of nascent RNA chains by forming the encapsidation complex with the nucleocapsid protein N (N-P complex). Acts as a chaperone for newly synthesized free N protein, so-called N0, allowing encapsidation of nascent RNA chains during replication. The nucleoprotein protein N prevents excessive phosphorylation of P, which leads to down-regulation of viral transcription/ replication. Participates, together with N, in the formation of viral factories (viroplasms), which are large inclusions in the host cytoplasm where replication takes place. The sequence is that of Phosphoprotein (P/V) from Bos indicus (Zebu).